Here is a 364-residue protein sequence, read N- to C-terminus: V-type proton ATPase subunit d (364 aa).

It belongs to the V-ATPase V0D/AC39 subunit family. V-ATPase is a heteromultimeric enzyme composed of a peripheral catalytic V1 complex (components A to H) attached to an integral membrane V0 proton pore complex (components: a, c, c', c'', d, e, f and VOA1).

It is found in the vacuole membrane. Subunit of the V0 complex of vacuolar(H+)-ATPase (V-ATPase), a multisubunit enzyme composed of a peripheral complex (V1) that hydrolyzes ATP and a membrane integral complex (V0) that translocates protons. V-ATPase is responsible for acidifying and maintaining the pH of intracellular compartments. This subunit is a non-integral membrane component of the membrane pore domain and is required for proper assembly of the V0 sector. Might be involved in the regulated assembly of V1 subunits onto the membrane sector or alternatively may prevent the passage of protons through V0 pores. In Neurospora crassa (strain ATCC 24698 / 74-OR23-1A / CBS 708.71 / DSM 1257 / FGSC 987), this protein is V-type proton ATPase subunit d.